Reading from the N-terminus, the 442-residue chain is 26S proteasome regulatory subunit 6A (442 aa).

Ser-12 carries the post-translational modification Phosphoserine. 230–237 contacts ATP; it reads GPPGTGKT. Ser-379 carries the post-translational modification Phosphoserine.

Belongs to the AAA ATPase family. In terms of assembly, component of the 19S proteasome regulatory particle complex. The 26S proteasome consists of a 20S core particle (CP) and two 19S regulatory subunits (RP). The regulatory particle is made of a lid composed of 9 subunits, a base containing 6 ATPases including PSMC3 and few additional components. Interacts with PAAF1.

Its subcellular location is the cytoplasm. It localises to the nucleus. Its function is as follows. Component of the 26S proteasome, a multiprotein complex involved in the ATP-dependent degradation of ubiquitinated proteins. This complex plays a key role in the maintenance of protein homeostasis by removing misfolded or damaged proteins, which could impair cellular functions, and by removing proteins whose functions are no longer required. Therefore, the proteasome participates in numerous cellular processes, including cell cycle progression, apoptosis, or DNA damage repair. PSMC3 belongs to the heterohexameric ring of AAA (ATPases associated with diverse cellular activities) proteins that unfolds ubiquitinated target proteins that are concurrently translocated into a proteolytic chamber and degraded into peptides. This chain is 26S proteasome regulatory subunit 6A (Psmc3), found in Mus musculus (Mouse).